A 336-amino-acid chain; its full sequence is Palmitoyltransferase SWF1 (336 aa).

Residues 1-2 (MS) lie on the Lumenal side of the membrane. The helical transmembrane segment at 3-23 (WNLLFVLLIGFVVLILLSPVF) threads the bilayer. The Cytoplasmic segment spans residues 24 to 50 (KSTWPFSTFYRNVFQPFLVDDQKYRWK). Residues 51-71 (LHLVPLFYTSIYLYLVYTYHM) form a helical membrane-spanning segment. Residues 72–86 (RVESTIKNELFLLER) are Lumenal-facing. The helical transmembrane segment at 87–107 (ILIVPIIILPPVALGILAMVS) threads the bilayer. Residues 108–179 (RAEDSKDHKS…CIGKGNYLQF (72 aa)) lie on the Cytoplasmic side of the membrane. The DHHC domain maps to 134–184 (IKCSTCRIVKPARSKHCSICNRCVLVADHHCIWINNCIGKGNYLQFYLFLI). The helical transmembrane segment at 180-200 (YLFLISNIFSMCYAFLRLWYI) threads the bilayer. Residues 201–216 (SLNSTSTLPRAVLTLT) are Lumenal-facing. Residues 217–237 (ILCGCFTIICAIFTYLQLAIV) traverse the membrane as a helical segment. Over 238-336 (KEGMTTNEQD…TFLANLTDLI (99 aa)) the chain is Cytoplasmic.

Belongs to the DHHC palmitoyltransferase family. SWF1 subfamily.

The protein localises to the endoplasmic reticulum membrane. The catalysed reaction is L-cysteinyl-[protein] + hexadecanoyl-CoA = S-hexadecanoyl-L-cysteinyl-[protein] + CoA. Palmitoyltransferase that targets several endosomal SNAREs. Palmitoylates the SNAREs SNC1, SNC2, SYN8 and TLG1, at cysteine residues close to the cytoplasmic end of their transmembrane domain. May have a role in the cellular quality control of transmembrane domain-containing proteins. The protein is Palmitoyltransferase SWF1 (SWF1) of Saccharomyces cerevisiae (strain ATCC 204508 / S288c) (Baker's yeast).